A 130-amino-acid chain; its full sequence is Small ribosomal subunit protein uS8 (130 aa).

The protein belongs to the universal ribosomal protein uS8 family. In terms of assembly, part of the 30S ribosomal subunit.

One of the primary rRNA binding proteins, it binds directly to 16S rRNA central domain where it helps coordinate assembly of the platform of the 30S subunit. The sequence is that of Small ribosomal subunit protein uS8 from Pyrobaculum arsenaticum (strain DSM 13514 / JCM 11321 / PZ6).